Consider the following 277-residue polypeptide: uncharacterized protein (277 aa).

Residues 1-20 are disordered; that stretch reads MVTTSPPPTLTNSVQPHPTT.

This is an uncharacterized protein from Acidianus convivator (ATV).